A 128-amino-acid polypeptide reads, in one-letter code: Cytochrome c' (128 aa).

Heme c is bound by residues Gln13, Gln17, Glu69, Thr70, Cys118, Cys121, and His122.

Binds 1 heme c group covalently per subunit.

Its function is as follows. Cytochrome c' is the most widely occurring bacterial c-type cytochrome. Cytochromes c' are high-spin proteins and the heme has no sixth ligand. Their exact function is not known. The polypeptide is Cytochrome c' (Magnetospirillum fulvum (Rhodospirillum fulvum)).